The sequence spans 98 residues: Biogenesis of lysosome-related organelles complex 1 subunit SNN1 (98 aa).

A coiled-coil region spans residues 55 to 98 (MDEQELLQEEGSLKEELARVNQLKKRLDKLTELYAELARKCGAL).

It belongs to the SNAPIN family. In terms of assembly, component of the biogenesis of lysosome-related organelles complex-1 (BLOC-1).

It is found in the endosome. Its function is as follows. Component of the biogenesis of lysosome-related organelles complex-1 (BLOC-1), a complex involved in endosomal cargo sorting. This Eremothecium gossypii (strain ATCC 10895 / CBS 109.51 / FGSC 9923 / NRRL Y-1056) (Yeast) protein is Biogenesis of lysosome-related organelles complex 1 subunit SNN1 (SNN1).